The following is a 244-amino-acid chain: MSTNPKPAYRRVLLKLSGEALQGSEGFGIDPAVLERMAQEIKELVELGVQVGLVIGGGNLFRGAGLAKAGMNRVVGDHMGMLATVMNGLAMRDALHRAYVNARLMSAISLQGVCDSYSWAEAISQLRAGKVVIFSAGTGNPFFTTDSAACLRGIEIEADVVLKATKVDGVFNEDPVKNPDAVLYHELSYNEVLEKELKVMDLAAFTLARDHDLPIRVFNMNKPGALRRVIMGEPEGTLIHHIGK.

15 to 18 (KLSG) provides a ligand contact to ATP. Residues 23-28 (GSEGFG) are involved in allosteric activation by GTP. Glycine 57 lines the UMP pocket. Residues glycine 58 and arginine 62 each coordinate ATP. UMP contacts are provided by residues aspartate 77 and 138 to 145 (TGNPFFTT). ATP contacts are provided by threonine 165, phenylalanine 171, and aspartate 174.

Belongs to the UMP kinase family. As to quaternary structure, homohexamer.

The protein resides in the cytoplasm. The catalysed reaction is UMP + ATP = UDP + ADP. It functions in the pathway pyrimidine metabolism; CTP biosynthesis via de novo pathway; UDP from UMP (UMPK route): step 1/1. Allosterically activated by GTP. Inhibited by UTP. Its function is as follows. Catalyzes the reversible phosphorylation of UMP to UDP. This Aeromonas salmonicida (strain A449) protein is Uridylate kinase.